A 239-amino-acid chain; its full sequence is Ribonuclease PH (239 aa).

Phosphate contacts are provided by residues R87 and 125–127 (GTR).

The protein belongs to the RNase PH family. In terms of assembly, homohexameric ring arranged as a trimer of dimers.

It catalyses the reaction tRNA(n+1) + phosphate = tRNA(n) + a ribonucleoside 5'-diphosphate. Functionally, phosphorolytic 3'-5' exoribonuclease that plays an important role in tRNA 3'-end maturation. Removes nucleotide residues following the 3'-CCA terminus of tRNAs; can also add nucleotides to the ends of RNA molecules by using nucleoside diphosphates as substrates, but this may not be physiologically important. Probably plays a role in initiation of 16S rRNA degradation (leading to ribosome degradation) during starvation. The sequence is that of Ribonuclease PH from Pseudomonas aeruginosa (strain LESB58).